Consider the following 1015-residue polypeptide: MLTALAPPALPGIPRQLPTAPARRQDSSGSSGSYYTAPGSPEPPDVGPDAKGPANWPWVAPGRGAGAQPRLSVSAQNSRQRHGPGSGFPRGPGSGPRPPQPQLRTLPSGEMEVIFGVGPLFGCSGADDREAQQQFTEPAFISPLPPGPASPAAVPRQSQVPDGGSRWATYLELRPRGPSPAAPAQFECVEVALEEGAAPARPRTVPKRQIELRPRPQSPPRAAGAPRPRLLLRTGSLDESLGPLQAAAGFVQTALARKLSPEAPAPSSATFGSTGRSEPETRETARSTHVVLEKAKSRPLRVRDNSAPAKAPRPWPSLRERAIRRDKPAPGTEPLGPVSSSIFLQSEEKIQEARKTRFPREAPDRTVQRARSPPFECRIPSEVPSRAVRPRSPSPPRQTPNGAVRGPRCPSPQNLSPWDRTTRRVSSPLFPEASSEWENQNPAVEETVSRRSPSPPILSQWNQCVAGERSPSLEAPSLWEIPHSAVADAVEPRSSPSPPAFFPWEAPDRPIGTWGPSPQETWDPMGPGSSIAFTQEAQNGLTQEELAPPTPSAPGTPEPTEMQSPSTREISDLAFGGSQQSPEVAAPEPPGSHPVGTLDADKCPEVLGPGEAASGRPRMAIPRPRDVRKLVKTTYAPGFPAGAQGSGLPAPPADPCGEEGGESKTQEPPALGPPAPAHYTSVFIKDFLPVVPHPYEPPEPSFDTVARDASQPNGVLRRRAENSTAKPFKRTEIRLPGALALGRRPEVTSRVRARGPGGENRDVEAQRLVPDGDGRTSPLGGARSSSQRSPVGPAGVRSPRPGSPQMQASPSPGIAPKPKTPPTAPEPAAAVQAPLPREPLALAGRTAPAQPRAASAPPTDRSPQSPSQGARRQPGAAPLGKVLVDPESGRYYFVEAPRQPRLRVLFDPESGQYVEVLLPPSSPGPPHRVYTPLALGLGLYPPAYGPIPSLSLPPSPGPQALGSPQLPWVSEAGPLDGTYYLPVSGTPNPAPPLLLCAPPSSSGPTQPGKGSLFPL.

Disordered regions lie at residues 1–111, 139–164, 196–236, 259–460, 488–678, 690–883, and 991–1015; these read MLTA…SGEM, AFIS…PDGG, GAAP…RTGS, LSPE…ILSQ, DAVE…APAH, VVPH…GKVL, and PPLL…LFPL. A compositionally biased stretch (gly residues) spans 84 to 94; the sequence is PGSGFPRGPGS. Residues 220 to 233 are compositionally biased toward low complexity; the sequence is PRAAGAPRPRLLLR. Residues 267-276 show a composition bias toward polar residues; the sequence is SSATFGSTGR. Basic and acidic residues-rich tracts occupy residues 277 to 304, 318 to 328, and 346 to 367; these read SEPE…RVRD, LRERAIRRDKP, and SEEK…DRTV. Low complexity predominate over residues 380–391; sequence PSEVPSRAVRPR. Over residues 531-542 the composition is skewed to polar residues; it reads IAFTQEAQNGLT. Composition is skewed to pro residues over residues 548-557 and 691-700; these read PPTPSAPGTP and VPHPYEPPEP. Basic and acidic residues predominate over residues 759-774; it reads ENRDVEAQRLVPDGDG. Positions 813–825 are enriched in pro residues; sequence GIAPKPKTPPTAP. Composition is skewed to low complexity over residues 826–835 and 847–858; these read EPAAAVQAPL and APAQPRAASAPP. The segment covering 861 to 870 has biased composition (polar residues); sequence RSPQSPSQGA. Over residues 993–1004 the composition is skewed to low complexity; sequence LLLCAPPSSSGP.

The sequence is that of Proline-rich basic protein 1 (PROB1) from Homo sapiens (Human).